A 347-amino-acid polypeptide reads, in one-letter code: Protein RecA (347 aa).

Residue 64 to 71 (GPESSGKT) coordinates ATP. The disordered stretch occupies residues 328 to 347 (DKVDEDKTEEEASQESLDLK).

This sequence belongs to the RecA family.

The protein resides in the cytoplasm. Can catalyze the hydrolysis of ATP in the presence of single-stranded DNA, the ATP-dependent uptake of single-stranded DNA by duplex DNA, and the ATP-dependent hybridization of homologous single-stranded DNAs. It interacts with LexA causing its activation and leading to its autocatalytic cleavage. In Oceanobacillus iheyensis (strain DSM 14371 / CIP 107618 / JCM 11309 / KCTC 3954 / HTE831), this protein is Protein RecA.